The sequence spans 32 residues: Photosystem II reaction center protein T (32 aa).

The chain crosses the membrane as a helical span at residues 3–23 (AFAYVLILTLAVVTLFFAVAF).

This sequence belongs to the PsbT family. In terms of assembly, PSII is composed of 1 copy each of membrane proteins PsbA, PsbB, PsbC, PsbD, PsbE, PsbF, PsbH, PsbI, PsbJ, PsbK, PsbL, PsbM, PsbT, PsbX, PsbY, Psb30/Ycf12, peripheral proteins PsbO, CyanoQ (PsbQ), PsbU, PsbV and a large number of cofactors. It forms dimeric complexes.

It is found in the cellular thylakoid membrane. In terms of biological role, found at the monomer-monomer interface of the photosystem II (PS II) dimer, plays a role in assembly and dimerization of PSII. PSII is a light-driven water plastoquinone oxidoreductase, using light energy to abstract electrons from H(2)O, generating a proton gradient subsequently used for ATP formation. In Prochlorococcus marinus (strain MIT 9301), this protein is Photosystem II reaction center protein T.